The chain runs to 125 residues: MAVCIIDHDNIRGVIYFEPVHGKDKVLGSVIGLKSGTYSLIIHRYGDISQGCDSIGSPEIFIGNIFVNRYGVAYVYLDTDVNIFTIIGKALSISKNDQRLACEVIGISYINEKIIHFLTINENGV.

Cysteines 52 and 102 form a disulfide.

The protein belongs to the Cu-Zn superoxide dismutase family.

Its subcellular location is the virion. It is found in the host cytoplasm. In terms of biological role, superoxide dismutase-like protein with no enzymatic activity. The chain is Cu-Zn superoxide dismutase-like protein OPG175 (OPG175) from Homo sapiens (Human).